Consider the following 454-residue polypeptide: ADP-specific phosphofructokinase (454 aa).

Residues 1–452 form the ADPK domain; that stretch reads MIDEVRELGI…FLSYLSLLRR (452 aa). Mg(2+) contacts are provided by E263, E293, and D436. The Proton acceptor role is filled by D436.

This sequence belongs to the carbohydrate kinase PfkC family. As to quaternary structure, homotetramer. Requires Mg(2+) as cofactor.

Its subcellular location is the cytoplasm. The catalysed reaction is beta-D-fructose 6-phosphate + ADP = beta-D-fructose 1,6-bisphosphate + AMP + H(+). It functions in the pathway carbohydrate degradation; glycolysis. Its activity is regulated as follows. Inhibited by AMP and ATP. Catalyzes the phosphorylation of fructose 6-phosphate to fructose 1,6-bisphosphate using ADP as the phosphate donor. As a phosphoryl group donor, ADP can be replaced by GDP, ATP, and GTP to a limited extent. The polypeptide is ADP-specific phosphofructokinase (pfkC) (Pyrococcus furiosus (strain ATCC 43587 / DSM 3638 / JCM 8422 / Vc1)).